The following is a 299-amino-acid chain: MLFDQIASNKRKTWILLLVFFLLLALVGYAVGYLFIRSGLGGLVIALIIGFIYALSMIFQSTEIVMSMNGAREVDEQTAPDLYHVVEDMALVAQIPMPRVFIIDDPALNAFATGSNPQNAAVAATSGLLAIMNREELEAVMGHEVSHIRNYDIRISTIAVALASAITMLSSMAGRMMWWGGAGRRRSDDDRDGNGLEIIMLVVSLLAIVLAPLAATLVQLAISRQREFLADASSVELTRNPQGMINALDKLDNSKPMSRHVDDASSALYINDPKKGGGFQKLFYTHPPISERIERLKQM.

The next 2 membrane-spanning stretches (helical) occupy residues 15–35 (ILLL…GYLF) and 39–59 (GLGG…SMIF). Histidine 143 provides a ligand contact to Zn(2+). Glutamate 144 is an active-site residue. A Zn(2+)-binding site is contributed by histidine 147. 2 helical membrane passes run 158–178 (IAVA…RMMW) and 198–218 (IIML…ATLV). Glutamate 227 is a Zn(2+) binding site.

This sequence belongs to the peptidase M48B family. Zn(2+) serves as cofactor.

The protein localises to the cell membrane. The protein is Protease HtpX homolog of Streptococcus pneumoniae serotype 4 (strain ATCC BAA-334 / TIGR4).